Reading from the N-terminus, the 362-residue chain is C-C chemokine receptor type 10 (362 aa).

Residues 1–48 are Extracellular-facing; it reads MGTKPTEQVSWGLYSGYDEEAYSVGPLPELCYKADVQAFSRAFQPSVS. Residues 49–69 traverse the membrane as a helical segment; it reads LMVAVLGLAGNGLVLATHLAA. Residues 70–80 lie on the Cytoplasmic side of the membrane; the sequence is RRTTRSPTSVH. Residues 81 to 101 traverse the membrane as a helical segment; it reads LLQLALADLLLALTLPFAAAG. Over 102–115 the chain is Extracellular; that stretch reads ALQGWNLGSTTCRA. A disulfide bridge links Cys113 with Cys191. Residues 116 to 136 form a helical membrane-spanning segment; it reads ISGLYSASFHAGFLFLACISA. At 137–159 the chain is on the cytoplasmic side; the sequence is DRYVAIARALPAGQRPSTPSRAH. Residues 160–180 form a helical membrane-spanning segment; it reads LVSVFVWLLSLFLALPALLFS. The Extracellular portion of the chain corresponds to 181–208; it reads RDGPREGQRRCRLIFPESLTQTVKGASA. The chain crosses the membrane as a helical span at residues 209-229; the sequence is VAQVVLGFALPLGVMAACYAL. Residues 230 to 247 lie on the Cytoplasmic side of the membrane; that stretch reads LGRTLLAARGPERRRALR. A helical membrane pass occupies residues 248 to 268; the sequence is VVVALVVAFVVLQLPYSLALL. The Extracellular portion of the chain corresponds to 269–291; it reads LDTADLLAARERSCSSSKRKDLA. Residues 292-312 form a helical membrane-spanning segment; it reads LLVTGGLTLVRCSLNPVLYAF. Residues 313–362 lie on the Cytoplasmic side of the membrane; sequence LGLRFRRDLRRLLQGGGCSPKPNPRGRCPRRLRLSSCSAPTETHSLSWDN.

This sequence belongs to the G-protein coupled receptor 1 family. As to expression, expressed at high levels in small intestine, colon, lymph nodes, Peyer patches and at lower levels in thymus, lung and spleen.

The protein localises to the cell membrane. In terms of biological role, receptor for chemokines SCYA27 and SCYA28. Subsequently transduces a signal by increasing the intracellular calcium ions level. This Mus musculus (Mouse) protein is C-C chemokine receptor type 10 (Ccr10).